Consider the following 462-residue polypeptide: Protoheme IX farnesyltransferase, mitochondrial (462 aa).

A mitochondrion-targeting transit peptide spans 1–30 (MSYFPRTYAHLMRNVLAHNKGNIYLQIGTQ). Helical transmembrane passes span 158-178 (TILV…PASV), 234-254 (LIGT…VAIL), 274-294 (IINT…GWAA), 298-318 (LSHP…FPHF), 352-372 (YSIL…TDWY), 373-393 (YQID…KFYW), and 425-445 (FMAS…HKKG).

It belongs to the UbiA prenyltransferase family. Forms ~370 kDa homooligomeric complexes.

The protein localises to the mitochondrion. Its subcellular location is the mitochondrion membrane. It catalyses the reaction heme b + (2E,6E)-farnesyl diphosphate + H2O = Fe(II)-heme o + diphosphate. It participates in porphyrin-containing compound metabolism; heme O biosynthesis; heme O from protoheme: step 1/1. Its activity is regulated as follows. Positively regulated by the hydroxylated intermediate (heme I) formed at the subsequent step, or by HAS/COX15 itself. Functionally, catalyzes the first reaction in the biosynthesis of heme A, a prosthetic group of mitochondrial cytochrome c oxidase (CcO). Heme A is synthesized from heme B by two sequential enzymatic reactions catalyzed by heme O synthase (HOS/COX10) and heme A synthase (HAS/COX15). HOS converts heme B (protoheme IX) to heme O by substitution of the vinyl group on carbon 2 of heme B porphyrin ring with a hydroxyethyl farnesyl side group. In Saccharomyces cerevisiae (strain ATCC 204508 / S288c) (Baker's yeast), this protein is Protoheme IX farnesyltransferase, mitochondrial (COX10).